Consider the following 546-residue polypeptide: 3-(3-hydroxy-phenyl)propionate/3-hydroxycinnamic acid hydroxylase 2 (546 aa).

FAD-binding positions include 10-39 (SVAI…VVER) and 278-288 (FVAGRIALVGD).

It belongs to the PheA/TfdB FAD monooxygenase family. FAD serves as cofactor.

It catalyses the reaction 3-(3-hydroxyphenyl)propanoate + NADH + O2 + H(+) = 3-(2,3-dihydroxyphenyl)propanoate + NAD(+) + H2O. It carries out the reaction (2E)-3-(3-hydroxyphenyl)prop-2-enoate + NADH + O2 + H(+) = (2E)-3-(2,3-dihydroxyphenyl)prop-2-enoate + NAD(+) + H2O. It participates in aromatic compound metabolism; 3-phenylpropanoate degradation. Catalyzes the insertion of one atom of molecular oxygen into position 2 of the phenyl ring of 3-(3-hydroxyphenyl)propionate (3-HPP) and hydroxycinnamic acid (3HCI). The sequence is that of 3-(3-hydroxy-phenyl)propionate/3-hydroxycinnamic acid hydroxylase 2 from Burkholderia vietnamiensis (strain G4 / LMG 22486) (Burkholderia cepacia (strain R1808)).